Here is a 132-residue protein sequence, read N- to C-terminus: Myelin P2 protein (132 aa).

The residue at position 2 (Ser2) is an N-acetylserine. (9Z)-octadecenoate contacts are provided by residues Arg107 and 127–129 (RIY). Hexadecanoate-binding positions include Arg107 and 127 to 129 (RIY).

This sequence belongs to the calycin superfamily. Fatty-acid binding protein (FABP) family. In terms of assembly, monomer.

The protein localises to the cytoplasm. May play a role in lipid transport protein in Schwann cells. May bind cholesterol. The protein is Myelin P2 protein (PMP2) of Oryctolagus cuniculus (Rabbit).